The primary structure comprises 356 residues: Protein-glutamate methylesterase/protein-glutamine glutaminase (356 aa).

A Response regulatory domain is found at 4 to 121; that stretch reads KVLIVDDSAL…QSGMLEYTDL (118 aa). A 4-aspartylphosphate modification is found at D55. The CheB-type methylesterase domain occupies 156-349; that stretch reads PLTSSEKLII…RRVLEFFAAH (194 aa). Catalysis depends on residues S169, H195, and D291.

Belongs to the CheB family. Post-translationally, phosphorylated by CheA. Phosphorylation of the N-terminal regulatory domain activates the methylesterase activity.

It is found in the cytoplasm. It catalyses the reaction [protein]-L-glutamate 5-O-methyl ester + H2O = L-glutamyl-[protein] + methanol + H(+). It carries out the reaction L-glutaminyl-[protein] + H2O = L-glutamyl-[protein] + NH4(+). Its function is as follows. Involved in chemotaxis. Part of a chemotaxis signal transduction system that modulates chemotaxis in response to various stimuli. Catalyzes the demethylation of specific methylglutamate residues introduced into the chemoreceptors (methyl-accepting chemotaxis proteins or MCP) by CheR. Also mediates the irreversible deamidation of specific glutamine residues to glutamic acid. In Thiobacillus denitrificans (strain ATCC 25259 / T1), this protein is Protein-glutamate methylesterase/protein-glutamine glutaminase.